A 122-amino-acid chain; its full sequence is Large ribosomal subunit protein uL14 (122 aa).

It belongs to the universal ribosomal protein uL14 family. In terms of assembly, part of the 50S ribosomal subunit. Forms a cluster with proteins L3 and L19. In the 70S ribosome, L14 and L19 interact and together make contacts with the 16S rRNA in bridges B5 and B8.

In terms of biological role, binds to 23S rRNA. Forms part of two intersubunit bridges in the 70S ribosome. The sequence is that of Large ribosomal subunit protein uL14 from Gluconacetobacter diazotrophicus (strain ATCC 49037 / DSM 5601 / CCUG 37298 / CIP 103539 / LMG 7603 / PAl5).